Consider the following 493-residue polypeptide: Bifunctional protein GlmU (493 aa).

Residues 1 to 246 are pyrophosphorylase; that stretch reads MTGELDVDGE…SWLVAGINDR (246 aa). Residues 21–24, Lys35, Gln88, 93–94, 117–119, Gly156, Glu171, Asn186, and Asn244 contribute to the UDP-N-acetyl-alpha-D-glucosamine site; these read LAAG, GT, and SGD. Asp119 contacts Mg(2+). Asn244 is a binding site for Mg(2+). The linker stretch occupies residues 247 to 267; sequence VQLTAAATELNARIIRRWQLA. Residues 268–493 are N-acetyltransferase; sequence GVTIHDPRTT…DGPADDASDA (226 aa). The UDP-N-acetyl-alpha-D-glucosamine site is built by Arg349 and Lys367. Residue His379 is the Proton acceptor of the active site. UDP-N-acetyl-alpha-D-glucosamine is bound by residues Tyr382 and Asn393. Acetyl-CoA contacts are provided by residues Ala396, 402–403, Ser421, and Ala439; that span reads NY. The interval 470–493 is disordered; it reads RPGTPEARAAVEAADGPADDASDA.

This sequence in the N-terminal section; belongs to the N-acetylglucosamine-1-phosphate uridyltransferase family. The protein in the C-terminal section; belongs to the transferase hexapeptide repeat family. In terms of assembly, homotrimer. Mg(2+) is required as a cofactor.

It localises to the cytoplasm. The catalysed reaction is alpha-D-glucosamine 1-phosphate + acetyl-CoA = N-acetyl-alpha-D-glucosamine 1-phosphate + CoA + H(+). It carries out the reaction N-acetyl-alpha-D-glucosamine 1-phosphate + UTP + H(+) = UDP-N-acetyl-alpha-D-glucosamine + diphosphate. It participates in nucleotide-sugar biosynthesis; UDP-N-acetyl-alpha-D-glucosamine biosynthesis; N-acetyl-alpha-D-glucosamine 1-phosphate from alpha-D-glucosamine 6-phosphate (route II): step 2/2. The protein operates within nucleotide-sugar biosynthesis; UDP-N-acetyl-alpha-D-glucosamine biosynthesis; UDP-N-acetyl-alpha-D-glucosamine from N-acetyl-alpha-D-glucosamine 1-phosphate: step 1/1. It functions in the pathway bacterial outer membrane biogenesis; LPS lipid A biosynthesis. Its function is as follows. Catalyzes the last two sequential reactions in the de novo biosynthetic pathway for UDP-N-acetylglucosamine (UDP-GlcNAc). The C-terminal domain catalyzes the transfer of acetyl group from acetyl coenzyme A to glucosamine-1-phosphate (GlcN-1-P) to produce N-acetylglucosamine-1-phosphate (GlcNAc-1-P), which is converted into UDP-GlcNAc by the transfer of uridine 5-monophosphate (from uridine 5-triphosphate), a reaction catalyzed by the N-terminal domain. The protein is Bifunctional protein GlmU of Clavibacter sepedonicus (Clavibacter michiganensis subsp. sepedonicus).